The sequence spans 701 residues: MSDDQQYNQDKLSQDFQNTSIGSGEQQQQSYQQYQQQPQQNNFNANSAPTFTPSGQQGGYQGGYQGGYQGGYQNYSQGGYQNYNQGYQNYNQGYQGYQNNNRGGYNNYNNRGGYNNYNNYNQQDQQPVQNQGMSLADFQKQQNAQANLNKPKKTLKLASSSGIKLANAKKAPETESKEATPAATEKEATPAATEKEATPAATEKEATPAATEKETTPAPAKKEATPASVKSESKPASKSTSKVATKESTPVTSDKVIQEQVDEVDEEVVKDMFGGKDHVSIIFMGHVDAGKSTMGGNILYLTGSVDKRTVDKYEREAKDAGRQGWYLSWVMDTNKEERSDGKTIEVGKAYFETEKRRYTILDAPGHKMYVSEMIGGASQADVGILVISARKGEYETGFEKGGQTREHALLAKTQGVNKIIVVVNKMDDPTVGWAEDRYKDCITKLGTFLKGIGYAKDDIIFMPVSGYTGAGIKDRVNPKDCPWYSGPSLLEFLDNMKTMQRHINGPFMLPISGKMKDMGTIIEGKIESGHIKKGGNLLLMPNKASIEVVAIFNETEQECDAAFCGEQVRLKIKGVEEEDLAPGYVLTSPLKPIKTITRFEAQIAIVELKSILSNGFSCVMHLHTAIEEVTFIELKHKLEKGTNRKSKKPPAFAKKGMKVIAILETNESVCAETYADYPQLGRFTLRDQGTTIAIGKITKVL.

The span at 1–25 (MSDDQQYNQDKLSQDFQNTSIGSGE) shows a compositional bias: polar residues. 3 disordered regions span residues 1-63 (MSDD…YQGG), 91-124 (NQGYQGYQNNNRGGYNNYNNRGGYNNYNNYNQQD), and 164-259 (KLAN…VIQE). The several sort of repeats stretch occupies residues 20–131 (SIGSGEQQQQ…QQDQQPVQNQ (112 aa)). Positions 26–40 (QQQQSYQQYQQQPQQ) are enriched in low complexity. A compositionally biased stretch (polar residues) spans 41 to 54 (NNFNANSAPTFTPS). A charged region spans residues 132–271 (GMSLADFQKQ…DEVDEEVVKD (140 aa)). Residues 170-224 (KAPETESKEATPAATEKEATPAATEKEATPAATEKEATPAATEKETTPAPAKKEA) are compositionally biased toward basic and acidic residues. Over residues 228–252 (SVKSESKPASKSTSKVATKESTPVT) the composition is skewed to polar residues. In terms of domain architecture, tr-type G spans 276–501 (KDHVSIIFMG…FLDNMKTMQR (226 aa)). Positions 285-292 (GHVDAGKS) are G1. 285-292 (GHVDAGKS) lines the GTP pocket. The G2 stretch occupies residues 341 to 345 (GKTIE). A Phosphothreonine modification is found at Thr359. Positions 362-365 (DAPG) are G3. GTP contacts are provided by residues 362–366 (DAPGH) and 424–427 (NKMD). Positions 424–427 (NKMD) are G4. Residues 465 to 467 (SGY) are G5.

This sequence belongs to the TRAFAC class translation factor GTPase superfamily. Classic translation factor GTPase family. ERF3 subfamily.

It localises to the cytoplasm. Functionally, involved in translation termination. Stimulates the activity of ERF1. Binds guanine nucleotides. In Debaryomyces hansenii (strain ATCC 36239 / CBS 767 / BCRC 21394 / JCM 1990 / NBRC 0083 / IGC 2968) (Yeast), this protein is Eukaryotic peptide chain release factor GTP-binding subunit (SUP35).